A 105-amino-acid polypeptide reads, in one-letter code: Large ribosomal subunit protein uL24 (105 aa).

The protein belongs to the universal ribosomal protein uL24 family. As to quaternary structure, part of the 50S ribosomal subunit.

In terms of biological role, one of two assembly initiator proteins, it binds directly to the 5'-end of the 23S rRNA, where it nucleates assembly of the 50S subunit. One of the proteins that surrounds the polypeptide exit tunnel on the outside of the subunit. The chain is Large ribosomal subunit protein uL24 from Sphingopyxis alaskensis (strain DSM 13593 / LMG 18877 / RB2256) (Sphingomonas alaskensis).